Here is a 429-residue protein sequence, read N- to C-terminus: MREELNQGLIDFLKASPTPFHATASLVQRLEAAGYVRLDERETWHTEANGRYYVTRNDSSIVAIKMGRNSPLHDGIRLVGAHTDSPCLRVKPQPELQRQGFWQLGVEVYGGALLAPWFDRDLSLAGRVTFRRDGKVESQLIDFKAPIAIIPNLAIHLNREANQGWAINAQTELPPILAQFAGDERVDFRAVLTDQLAREHGLNADVVLDYELSFYDTQSAAVIGLHGDFIAGARLDNLLSCYAGLQALLNADTEETCVLVCNDHEEVGSCSACGADGPMLEQTLRRLLPEGDEFVRTIQKSLLVSADNAHGVHPNYAEKHDANHGPKLNAGPVIKVNSNQRYATNSETAGFFRHLCMAEEVPVQSFVVRSDMGCGSTIGPITASNLGVRTVDIGLPTFAMHSIRELCGSHDLAHLVKVLSAFYASRELP.

The Zn(2+) site is built by H82, H156, and H401.

This sequence belongs to the peptidase M18 family. Zn(2+) is required as a cofactor.

This Pseudomonas fluorescens (strain Pf0-1) protein is Probable M18 family aminopeptidase 2.